Here is a 335-residue protein sequence, read N- to C-terminus: Anthranilate phosphoribosyltransferase (335 aa).

5-phospho-alpha-D-ribose 1-diphosphate contacts are provided by residues Gly79, 82-83 (GD), Ser87, 89-92 (NIST), 107-115 (KHGNRSITS), and Ser119. Position 79 (Gly79) interacts with anthranilate. Ser91 is a Mg(2+) binding site. Residue Asn110 participates in anthranilate binding. Arg165 serves as a coordination point for anthranilate. Mg(2+)-binding residues include Asp224 and Glu225.

It belongs to the anthranilate phosphoribosyltransferase family. As to quaternary structure, homodimer. Mg(2+) is required as a cofactor.

The catalysed reaction is N-(5-phospho-beta-D-ribosyl)anthranilate + diphosphate = 5-phospho-alpha-D-ribose 1-diphosphate + anthranilate. The protein operates within amino-acid biosynthesis; L-tryptophan biosynthesis; L-tryptophan from chorismate: step 2/5. In terms of biological role, catalyzes the transfer of the phosphoribosyl group of 5-phosphorylribose-1-pyrophosphate (PRPP) to anthranilate to yield N-(5'-phosphoribosyl)-anthranilate (PRA). The sequence is that of Anthranilate phosphoribosyltransferase from Lactococcus lactis subsp. lactis (strain IL1403) (Streptococcus lactis).